The sequence spans 65 residues: Large ribosomal subunit protein bL35 (65 aa).

The protein belongs to the bacterial ribosomal protein bL35 family.

This Prochlorococcus marinus (strain MIT 9301) protein is Large ribosomal subunit protein bL35.